The following is a 343-amino-acid chain: Pseudaminic acid synthase (343 aa).

The region spanning 287-343 (SLYASKDIKKGEIFSEENVKSVRPSFGLHPKFYQELLGKKASKDIEFGDALKESDFR) is the AFP-like domain.

The protein belongs to the pseudaminic acid synthase family. It depends on a divalent metal cation as a cofactor.

It catalyses the reaction 2,4-diacetamido-2,4,6-trideoxy-beta-L-altrose + phosphoenolpyruvate + H2O = pseudaminate + phosphate. Catalyzes the fifth step in the biosynthesis of pseudaminic acid, a sialic-acid-like sugar that is used to modify flagellin. Catalyzes the condensation of phosphoenolpyruvate with 2,4-diacetamido-2,4,6-trideoxy-beta-l-altropyranose, forming pseudaminic acid. This is Pseudaminic acid synthase (pseI) from Campylobacter jejuni subsp. jejuni serotype O:23/36 (strain 81-176).